The following is a 327-amino-acid chain: Cyclic AMP-responsive element-binding protein 1 (327 aa).

Disordered regions lie at residues 1 to 29 (MTMD…TVQA) and 94 to 113 (SEDS…RREI). The KID domain occupies 8 to 146 (DNQQSGDAAV…IEEEKSEEET (139 aa)). Residues 20 to 29 (AESQQMTVQA) are compositionally biased toward polar residues. Ser-119 carries the phosphoserine; by CaMK1, CaMK2, CaMK4, PKB/AKT1 or PKB/AKT2, RPS6KA3, RPS6KA4, RPS6KA5 and SGK1 modification. A Glycyl lysine isopeptide (Lys-Gly) (interchain with G-Cter in SUMO2) cross-link involves residue Lys-122. A disordered region spans residues 126–149 (DLSSDAPGVPRIEEEKSEEETSAP). A Phosphoserine; by CaMK2 modification is found at Ser-128. A Phosphoserine; by HIPK2 modification is found at Ser-257. Residues 269-327 (ARKREVRLMKNREAARECRRKKKEYVKCLENRVAVLENQNKTLIEELKALKDLYCHKSD) form the bZIP domain. The basic motif stretch occupies residues 270–295 (RKREVRLMKNREAARECRRKKKEYVK). Residues Lys-271 and Lys-290 each participate in a glycyl lysine isopeptide (Lys-Gly) (interchain with G-Cter in SUMO1) cross-link. Residues 297 to 318 (LENRVAVLENQNKTLIEELKAL) form a leucine-zipper region.

The protein belongs to the bZIP family. Interacts with PPRC1. Binds DNA as a dimer. This dimer is stabilized by magnesium ions. Interacts, through the bZIP domain, with the coactivators CRTC1/TORC1, CRTC2/TORC2 and CRTC3/TORC3. When phosphorylated on Ser-119, binds CREBBP. Interacts with CREBL2; regulates CREB1 phosphorylation, stability and transcriptional activity. Interacts (phosphorylated form) with TOX3. Interacts with ARRB1. Binds to HIPK2. Interacts with SGK1. Interacts with TSSK4; this interaction facilitates phosphorylation on Ser-119. Forms a complex with KMT2A and CREBBP. Interacts with TOX4; CREB1 is required for full induction of TOX4-dependent activity and the interaction is increased by cAMP and inhibited by insulin. Post-translationally, phosphorylation of Ser-119 allows CREBBP binding. Stimulated by phosphorylation. Phosphorylation of both Ser-128 and Ser-119 in the SCN regulates the activity of CREB and participate in circadian rhythm generation. Phosphorylated upon calcium influx by CaMK4 and CaMK2 on Ser-119. CaMK4 is much more potent than CaMK2 in activating CREB. Phosphorylated by CaMK2 on Ser-128. Phosphorylation of Ser-128 blocks CREB-mediated transcription even when Ser-119 is phosphorylated. Phosphorylated by CaMK1. Phosphorylation of Ser-257 by HIPK2 in response to genotoxic stress promotes CREB1 activity, facilitating the recruitment of the coactivator CBP. Phosphorylated at Ser-119 by RPS6KA3, RPS6KA4 and RPS6KA5 in response to mitogenic or stress stimuli. CREBL2 positively regulates phosphorylation at Ser-119 thereby stimulating CREB1 transcriptional activity. In liver, phosphorylation is induced by fasting or glucagon in a circadian fashion. Phosphorylated by TSSK4 on Ser-119. In terms of processing, sumoylated with SUMO1. Sumoylation on Lys-290, but not on Lys-271, is required for nuclear localization of this protein. Sumoylation is enhanced under hypoxia, promoting nuclear localization and stabilization.

The protein localises to the nucleus. Phosphorylation-dependent transcription factor that stimulates transcription upon binding to the DNA cAMP response element (CRE), a sequence present in many viral and cellular promoters. Transcription activation is enhanced by the TORC coactivators which act independently of Ser-119 phosphorylation. Involved in different cellular processes including the synchronization of circadian rhythmicity and the differentiation of adipose cells. Regulates the expression of apoptotic and inflammatory response factors in cardiomyocytes in response to ERFE-mediated activation of AKT signaling. The protein is Cyclic AMP-responsive element-binding protein 1 (Creb1) of Rattus norvegicus (Rat).